Reading from the N-terminus, the 341-residue chain is MSSAVVHSDDLMEPTLQSVVNQKTLRWIFVGGKGGVGKTTTSCSLAIQLAKVRKSVLLISTDPAHNLSDAFGQKFGKEARLVDGYTNLSAMEIDPNGSIQDLLASGEGQGDDPLSGMGVGGMMQDLAFSIPGVDEAMSFAEVLKQVKSLSYEVIVFDTAPTGHTLRFLQFPTVLEKALAKLSQLSSQFGPMLNSILGSRGGLPGGQNIDELLQKMESLRETISEVNSQFKDADLTTFVCVCIAEFLSLYETERMIQELTSYNIDTHAIVVNQLLFPKQSSECEQCNARRKMQKKYLEQIEELYEDFNVVRMPLLVEEVRGKEKLEKFSDMLVNPYVPPEGN.

Residue 33 to 40 (KGGVGKTT) participates in ATP binding. Residue Asp62 is part of the active site. 2 residues coordinate ATP: Glu244 and Asn271. Cys282 and Cys285 together coordinate Zn(2+).

It belongs to the arsA ATPase family. Homodimer.

The protein localises to the cytoplasm. It localises to the endoplasmic reticulum. Its function is as follows. ATPase required for the post-translational delivery of tail-anchored (TA) proteins to the endoplasmic reticulum. Recognizes and selectively binds the transmembrane domain of TA proteins in the cytosol. This complex then targets to the endoplasmic reticulum by membrane-bound receptors, where the tail-anchored protein is released for insertion. This process is regulated by ATP binding and hydrolysis. ATP binding drives the homodimer towards the closed dimer state, facilitating recognition of newly synthesized TA membrane proteins. ATP hydrolysis is required for insertion. Subsequently, the homodimer reverts towards the open dimer state, lowering its affinity for the membrane-bound receptor, and returning it to the cytosol to initiate a new round of targeting. The chain is ATPase get3 (get3) from Aspergillus niger (strain ATCC MYA-4892 / CBS 513.88 / FGSC A1513).